The sequence spans 813 residues: Hyaluronate lyase HylB (813 aa).

Residues 1 to 32 constitute a signal peptide (tat-type signal); that stretch reads MFGTPSRRTFLTASALSAMALAASPTVTDAIA. Residues N222, H272, and Y281 contribute to the active site.

This sequence belongs to the polysaccharide lyase 8 family. Predicted to be exported by the Tat system. The position of the signal peptide cleavage has not been experimentally proven.

It localises to the secreted. It carries out the reaction [hyaluronan](n) = n 3-(4-deoxy-beta-D-gluc-4-enuronosyl)-N-acetyl-D-glucosamine + H2O. In terms of biological role, degrades hyaluronic acid (HA) exclusively into HA disaccharides (HA-2). Produced HA-2s confer anti-inflammatory properties leading to reduced immunopathology in the mouse model of acne. This is Hyaluronate lyase HylB from Cutibacterium acnes (strain DSM 16379 / KPA171202) (Propionibacterium acnes).